The sequence spans 690 residues: Elongation factor G (690 aa).

Positions 8–283 (EDYRNFGIMA…AVVDYLPSPV (276 aa)) constitute a tr-type G domain. Residues 17–24 (AHIDAGKT), 81–85 (DTPGH), and 135–138 (NKMD) each bind GTP.

This sequence belongs to the TRAFAC class translation factor GTPase superfamily. Classic translation factor GTPase family. EF-G/EF-2 subfamily.

The protein localises to the cytoplasm. Its function is as follows. Catalyzes the GTP-dependent ribosomal translocation step during translation elongation. During this step, the ribosome changes from the pre-translocational (PRE) to the post-translocational (POST) state as the newly formed A-site-bound peptidyl-tRNA and P-site-bound deacylated tRNA move to the P and E sites, respectively. Catalyzes the coordinated movement of the two tRNA molecules, the mRNA and conformational changes in the ribosome. The sequence is that of Elongation factor G from Rhodopseudomonas palustris (strain BisA53).